Here is a 110-residue protein sequence, read N- to C-terminus: Phosphoribosyl-AMP cyclohydrolase (110 aa).

Residue aspartate 80 coordinates Mg(2+). Cysteine 81 is a Zn(2+) binding site. The Mg(2+) site is built by aspartate 82 and aspartate 84. 2 residues coordinate Zn(2+): cysteine 97 and cysteine 104.

It belongs to the PRA-CH family. Homodimer. It depends on Mg(2+) as a cofactor. Requires Zn(2+) as cofactor.

The protein resides in the cytoplasm. It carries out the reaction 1-(5-phospho-beta-D-ribosyl)-5'-AMP + H2O = 1-(5-phospho-beta-D-ribosyl)-5-[(5-phospho-beta-D-ribosylamino)methylideneamino]imidazole-4-carboxamide. It functions in the pathway amino-acid biosynthesis; L-histidine biosynthesis; L-histidine from 5-phospho-alpha-D-ribose 1-diphosphate: step 3/9. Catalyzes the hydrolysis of the adenine ring of phosphoribosyl-AMP. In Clostridium botulinum (strain 657 / Type Ba4), this protein is Phosphoribosyl-AMP cyclohydrolase.